We begin with the raw amino-acid sequence, 110 residues long: UPF0102 protein Abu_0255 (110 aa).

The protein belongs to the UPF0102 family.

This is UPF0102 protein Abu_0255 from Aliarcobacter butzleri (strain RM4018) (Arcobacter butzleri).